Consider the following 152-residue polypeptide: Small ribosomal subunit protein uS11B (152 aa).

The interval 131-152 is disordered; the sequence is EDVTPIPSDSTRRKGGRRGRRL. A compositionally biased stretch (basic residues) spans 143–152; that stretch reads RKGGRRGRRL.

This sequence belongs to the universal ribosomal protein uS11 family.

The protein is Small ribosomal subunit protein uS11B of Anopheles gambiae (African malaria mosquito).